We begin with the raw amino-acid sequence, 494 residues long: 3-octaprenyl-4-hydroxybenzoate carboxy-lyase (494 aa).

Asn-172 contributes to the Mn(2+) binding site. Prenylated FMN contacts are provided by residues 175–177, 189–191, and 194–195; these read IYR, RWL, and RG. Glu-238 lines the Mn(2+) pocket. Asp-287 acts as the Proton donor in catalysis.

Belongs to the UbiD family. As to quaternary structure, homohexamer. Requires prenylated FMN as cofactor. The cofactor is Mn(2+).

Its subcellular location is the cell membrane. It catalyses the reaction a 4-hydroxy-3-(all-trans-polyprenyl)benzoate + H(+) = a 2-(all-trans-polyprenyl)phenol + CO2. It participates in cofactor biosynthesis; ubiquinone biosynthesis. Its function is as follows. Catalyzes the decarboxylation of 3-octaprenyl-4-hydroxy benzoate to 2-octaprenylphenol, an intermediate step in ubiquinone biosynthesis. This Cronobacter sakazakii (strain ATCC BAA-894) (Enterobacter sakazakii) protein is 3-octaprenyl-4-hydroxybenzoate carboxy-lyase.